The sequence spans 768 residues: Valine--tRNA ligase (768 aa).

The short motif at 37 to 47 (PTVSGKMHMGH) is the 'HIGH' region element. The 'KMSKS' region motif lies at 510–514 (KMSKS). Lysine 513 contributes to the ATP binding site.

Belongs to the class-I aminoacyl-tRNA synthetase family. ValS type 2 subfamily.

The protein resides in the cytoplasm. The catalysed reaction is tRNA(Val) + L-valine + ATP = L-valyl-tRNA(Val) + AMP + diphosphate. In terms of biological role, catalyzes the attachment of valine to tRNA(Val). As ValRS can inadvertently accommodate and process structurally similar amino acids such as threonine, to avoid such errors, it has a 'posttransfer' editing activity that hydrolyzes mischarged Thr-tRNA(Val) in a tRNA-dependent manner. The protein is Valine--tRNA ligase of Picrophilus torridus (strain ATCC 700027 / DSM 9790 / JCM 10055 / NBRC 100828 / KAW 2/3).